A 253-amino-acid polypeptide reads, in one-letter code: Chorismate mutase 2, cytosolic (253 aa).

In terms of domain architecture, Chorismate mutase spans 2-253 (DAAGGDQLSL…EVEYLLRRLD (252 aa)).

As to quaternary structure, homodimer. Interacts with Cmu1 of the fungal pathogen Ustilago maydis.

Its subcellular location is the cytoplasm. It localises to the cytosol. It catalyses the reaction chorismate = prephenate. It functions in the pathway metabolic intermediate biosynthesis; prephenate biosynthesis; prephenate from chorismate: step 1/1. No allosteric regulation. The polypeptide is Chorismate mutase 2, cytosolic (Zea mays (Maize)).